A 293-amino-acid chain; its full sequence is Lipoyl synthase (293 aa).

7 residues coordinate [4Fe-4S] cluster: C47, C52, C58, C73, C77, C80, and S285. Positions 59-274 (WSEGTATFMI…EKIGLELGFR (216 aa)) constitute a Radical SAM core domain.

This sequence belongs to the radical SAM superfamily. Lipoyl synthase family. [4Fe-4S] cluster serves as cofactor.

The protein localises to the cytoplasm. It carries out the reaction [[Fe-S] cluster scaffold protein carrying a second [4Fe-4S](2+) cluster] + N(6)-octanoyl-L-lysyl-[protein] + 2 oxidized [2Fe-2S]-[ferredoxin] + 2 S-adenosyl-L-methionine + 4 H(+) = [[Fe-S] cluster scaffold protein] + N(6)-[(R)-dihydrolipoyl]-L-lysyl-[protein] + 4 Fe(3+) + 2 hydrogen sulfide + 2 5'-deoxyadenosine + 2 L-methionine + 2 reduced [2Fe-2S]-[ferredoxin]. It functions in the pathway protein modification; protein lipoylation via endogenous pathway; protein N(6)-(lipoyl)lysine from octanoyl-[acyl-carrier-protein]: step 2/2. Catalyzes the radical-mediated insertion of two sulfur atoms into the C-6 and C-8 positions of the octanoyl moiety bound to the lipoyl domains of lipoate-dependent enzymes, thereby converting the octanoylated domains into lipoylated derivatives. In Christiangramia forsetii (strain DSM 17595 / CGMCC 1.15422 / KT0803) (Gramella forsetii), this protein is Lipoyl synthase.